The primary structure comprises 149 residues: Calmodulin (149 aa).

An N-acetylalanine modification is found at A2. 4 consecutive EF-hand domains span residues 8-43, 44-79, 81-116, and 117-149; these read EQIA…LGQN, PTEA…KMKD, DSEE…LGEK, and LTDE…MTAK. 14 residues coordinate Ca(2+): D21, D23, D25, T27, E32, D59, N61, T63, E68, D94, D96, N98, Y100, and E105. Residue K116 is modified to N6,N6,N6-trimethyllysine. D130, D132, D134, Q136, and E141 together coordinate Ca(2+).

This sequence belongs to the calmodulin family.

Functionally, calmodulin acts as part of a calcium signal transduction pathway by mediating the control of a large number of enzymes, ion channels, aquaporins and other proteins through calcium-binding. Calcium-binding is required for the activation of calmodulin. Among the enzymes to be stimulated by the calmodulin-calcium complex are a number of protein kinases, such as myosin light-chain kinases and calmodulin-dependent protein kinase type II (CaMK2), and phosphatases. The sequence is that of Calmodulin from Myxine glutinosa (Atlantic hagfish).